A 338-amino-acid polypeptide reads, in one-letter code: Lipoate-protein ligase A (338 aa).

In terms of domain architecture, BPL/LPL catalytic spans 29–216 (DPNQRVLFLW…AFFSHYGERV (188 aa)). ATP contacts are provided by residues Arg-71, 76-79 (GAVF), and Lys-134. Lys-134 provides a ligand contact to (R)-lipoate.

Belongs to the LplA family. Monomer.

The protein resides in the cytoplasm. It catalyses the reaction L-lysyl-[lipoyl-carrier protein] + (R)-lipoate + ATP = N(6)-[(R)-lipoyl]-L-lysyl-[lipoyl-carrier protein] + AMP + diphosphate + H(+). It functions in the pathway protein modification; protein lipoylation via exogenous pathway; protein N(6)-(lipoyl)lysine from lipoate: step 1/2. It participates in protein modification; protein lipoylation via exogenous pathway; protein N(6)-(lipoyl)lysine from lipoate: step 2/2. In terms of biological role, catalyzes both the ATP-dependent activation of exogenously supplied lipoate to lipoyl-AMP and the transfer of the activated lipoyl onto the lipoyl domains of lipoate-dependent enzymes. The protein is Lipoate-protein ligase A of Aeromonas hydrophila subsp. hydrophila (strain ATCC 7966 / DSM 30187 / BCRC 13018 / CCUG 14551 / JCM 1027 / KCTC 2358 / NCIMB 9240 / NCTC 8049).